The following is a 117-amino-acid chain: Large ribosomal subunit protein bL20 (117 aa).

Belongs to the bacterial ribosomal protein bL20 family.

Binds directly to 23S ribosomal RNA and is necessary for the in vitro assembly process of the 50S ribosomal subunit. It is not involved in the protein synthesizing functions of that subunit. The chain is Large ribosomal subunit protein bL20 from Aliivibrio salmonicida (strain LFI1238) (Vibrio salmonicida (strain LFI1238)).